Reading from the N-terminus, the 170-residue chain is Urease accessory protein UreE (170 aa).

It belongs to the UreE family.

Its subcellular location is the cytoplasm. Involved in urease metallocenter assembly. Binds nickel. Probably functions as a nickel donor during metallocenter assembly. This Helicobacter pylori (strain Shi470) protein is Urease accessory protein UreE.